Consider the following 513-residue polypeptide: Ribonuclease Y (513 aa).

The helical transmembrane segment at 3 to 23 threads the bilayer; that stretch reads IGTLLLFTFLGLVAGATAVWL. The tract at residues 77-96 is disordered; that stretch reads LQSVESKLKSREQTLNQRQE. Residues 82 to 96 are compositionally biased toward basic and acidic residues; the sequence is SKLKSREQTLNQRQE. Positions 203–263 constitute a KH domain; it reads SVTVFHIESD…VRREIARLAL (61 aa). Residues 329–422 form the HD domain; it reads LLQHSRETAN…VQVCDAISGA (94 aa).

Belongs to the RNase Y family.

Its subcellular location is the cell membrane. Functionally, endoribonuclease that initiates mRNA decay. The sequence is that of Ribonuclease Y from Porphyromonas gingivalis (strain ATCC BAA-308 / W83).